The chain runs to 168 residues: G/U mismatch-specific DNA glycosylase (168 aa).

Belongs to the uracil-DNA glycosylase (UDG) superfamily. TDG/mug family. As to quaternary structure, binds DNA as a monomer.

The protein resides in the cytoplasm. It carries out the reaction Specifically hydrolyzes mismatched double-stranded DNA and polynucleotides, releasing free uracil.. Excises ethenocytosine and uracil, which can arise by alkylation or deamination of cytosine, respectively, from the corresponding mispairs with guanine in ds-DNA. It is capable of hydrolyzing the carbon-nitrogen bond between the sugar-phosphate backbone of the DNA and the mispaired base. The complementary strand guanine functions in substrate recognition. Required for DNA damage lesion repair in stationary-phase cells. The protein is G/U mismatch-specific DNA glycosylase of Salmonella choleraesuis (strain SC-B67).